The chain runs to 76 residues: Histone acetyltransferase (76 aa).

Physically interacts with histone H3 in infected macrophages.

The protein resides in the secreted. The protein localises to the host cytoplasm. It is found in the host nucleus. The catalysed reaction is L-lysyl-[protein] + acetyl-CoA = N(6)-acetyl-L-lysyl-[protein] + CoA + H(+). Its activity is regulated as follows. Is completely inhibited by anacardic acid, an inhibitor of HAT activity. Functionally, histone acetyltransferase, which by binding to the host chromatin, may manipulate the expression of host genes involved in anti-inflammatory responses to evade clearance and to survive in the intracellular milieu. Acetylates histone H3 at the 'Lys-9' and 'Lys-14' positions. The polypeptide is Histone acetyltransferase (Mycobacterium tuberculosis (strain CDC 1551 / Oshkosh)).